The primary structure comprises 87 residues: DNA-directed RNA polymerase subunit omega (87 aa).

The protein belongs to the RNA polymerase subunit omega family. The RNAP catalytic core consists of 2 alpha, 1 beta, 1 beta' and 1 omega subunit. When a sigma factor is associated with the core the holoenzyme is formed, which can initiate transcription.

It catalyses the reaction RNA(n) + a ribonucleoside 5'-triphosphate = RNA(n+1) + diphosphate. In terms of biological role, promotes RNA polymerase assembly. Latches the N- and C-terminal regions of the beta' subunit thereby facilitating its interaction with the beta and alpha subunits. The polypeptide is DNA-directed RNA polymerase subunit omega (Azotobacter vinelandii (strain DJ / ATCC BAA-1303)).